The following is a 663-amino-acid chain: Transforming growth factor beta activator LRRC32 (663 aa).

Positions 1–17 are cleaved as a signal peptide; the sequence is MSHQILLLLAMLTLGLA. Residues 18–628 are Extracellular-facing; the sequence is ISQRREQVPC…CEKGGLKNVN (611 aa). The 28-residue stretch at 22–49 folds into the LRRNT domain; the sequence is REQVPCRTVNKEALCHGLGLLQVPSVLS. 10 LRR repeats span residues 49–72, 73–96, 98–123, 125–148, 149–172, 174–196, 197–220, 222–241, 243–267, and 269–287; these read SLDI…PLGF, YTAL…VFQA, PYLE…GLGR, PLLV…LLGE, TPRL…TFWG, PAVE…AFEA, LPHL…SLQQ, QVLD…PEPQ, QFQL…VFPR, and IYLN…LPRG. An N-linked (GlcNAc...) asparagine glycan is attached at N204. Residues N272, N305, and N309 are each glycosylated (N-linked (GlcNAc...) asparagine). A disordered region spans residues 291–311; that stretch reads LHAPSEGWSASPLSNPSRNAS. Residues 301–311 show a composition bias toward polar residues; sequence SPLSNPSRNAS. LRR repeat units lie at residues 315–338, 340–362, 363–386, 387–409, 411–433, 443–466, 468–489, 491–514, 515–539, 541–559, and 561–584; these read LSQL…FLEH, TSLR…QVDS, LPCL…TKVL, GSLQ…TFAS, ASLQ…AEPG, IPTL…SFLH, PLTE…ALVG, EASL…LPCF, LRLK…AVSL, VLDL…AMGG, and ETSL…WLAA. A glycan (N-linked (GlcNAc...) asparagine) is linked at N346. N546 carries an N-linked (GlcNAc...) asparagine glycan. The LRRCT domain occupies 572 to 621; sequence NPLSCCGNGWLAAQLHQGRVDVDATQDLICRFGSQEELSLSLVRPEDCEK. Residues 629-649 traverse the membrane as a helical segment; sequence LILLLSFTLVSAIVLTTLATI. Residues 650–663 lie on the Cytoplasmic side of the membrane; it reads CFLRRQKLSQQYKA.

This sequence belongs to the LRRC32/LRRC33 family. In terms of assembly, interacts with TGFB1; associates via disulfide bonds with the Latency-associated peptide chain (LAP) regulatory chain of TGFB1, leading to regulate activation of TGF-beta-1. Interacts with TGFB2. Interacts with TGFB3; associates via disulfide bonds with the Latency-associated peptide chain (LAP) regulatory chain of TGFB3, leading to regulate activation of TGF-beta-3. Interacts with LAPTM4B; decreases TGFB1 production in regulatory T-cells. Present in medial edge epithelial cells at 14.5 dpc (at protein level).

The protein resides in the cell membrane. It localises to the cell surface. Its function is as follows. Key regulator of transforming growth factor beta (TGFB1, TGFB2 and TGFB3) that controls TGF-beta activation by maintaining it in a latent state during storage in extracellular space. Associates specifically via disulfide bonds with the Latency-associated peptide (LAP), which is the regulatory chain of TGF-beta, and regulates integrin-dependent activation of TGF-beta. Able to outcompete LTBP1 for binding to LAP regulatory chain of TGF-beta. Controls activation of TGF-beta-1 (TGFB1) on the surface of activated regulatory T-cells (Tregs). Required for epithelial fusion during palate development by regulating activation of TGF-beta-3 (TGFB3). This is Transforming growth factor beta activator LRRC32 from Mus musculus (Mouse).